Reading from the N-terminus, the 264-residue chain is O-methyltransferase resE (264 aa).

2 residues coordinate S-adenosyl-L-methionine: Q97 and H142.

This sequence belongs to the methyltransferase superfamily.

It catalyses the reaction desmethylrestrictinol + S-adenosyl-L-methionine = restrictinol + S-adenosyl-L-homocysteine + H(+). The protein operates within antifungal biosynthesis. In terms of biological role, O-methyltransferase; part of the gene cluster that mediates the biosynthesis of the tetrahydropyranyl antifungal agent restricticin that acts as an inhibitor of CYP51 and blocks the ergosterol biosynthesis. Within the pathway, resE uses S-adenosylmethionine to methylate position C4 of desmethylrestrictinol to produce restrictinol. The highly reducing polyketide synthase resH, the short chain dehydrogenase resG, the cyclase resF, the FAD-dependent monooxygenase resA and the enoylreductase resD are required to generate the first stable intermediate desmethylrestrictinol. ResH with resD biosynthesize the first polyketide chain intermediate that is reduced by resG, followed by epoxidation by resA before 6-endo cyclization via epoxide opening by resF leads to desmethylrestrictinol. The methyltransferase resE then catalyzes the C4 O-methylation of desmethylrestrictinol to produce restrictinol, and the nonribosomal peptide synthetase resC catalyzes the C3 esterification of restrictinol with glycine that leads to restricticin. The protein is O-methyltransferase resE of Aspergillus sclerotiorum.